We begin with the raw amino-acid sequence, 453 residues long: AP-4 complex subunit mu-1 (453 aa).

Residues 184–452 (KNEVFLDVVE…LSHSNAYVIR (269 aa)) form the MHD domain. A disordered region spans residues 383–403 (PGLQGPPSRGPSPSAPPLGLG).

The protein belongs to the adaptor complexes medium subunit family. As to quaternary structure, adaptor protein complex 4 (AP-4) is a heterotetramer composed of two large adaptins (epsilon-type subunit AP4E1 and beta-type subunit AP4B1), a medium adaptin (mu-type subunit AP4M1) and a small adaptin (sigma-type AP4S1). Interacts with tyrosine-based sorting signals on the cytoplasmic tail of cargo proteins such as APP, ATG9A, LAMP2 and NAGPA. Interacts with the C-terminal domain of GRID2. Interacts with GRIA1 and GRIA2; the interaction is indirect via CACNG3. Interacts with CACNG3; CACNG3 associates GRIA1 and GRIA2 with the adaptor protein complex 4 (AP-4) to target them to the somatodendritic compartment of neurons. Interacts with HOOK1 and HOOK2; the interactions are direct, mediate the interaction between FTS-Hook-FHIP (FHF) complex and AP-4 and the perinuclear distribution of AP-4. In terms of tissue distribution, high levels in the olfactory bulb, the cerebral cortex, the granule and Purkinje cell layers of the cerebellar cortex and the CA3 region of the hippocampus. Low levels found in molecular layer of cerebellum.

Its subcellular location is the golgi apparatus. The protein resides in the trans-Golgi network membrane. It localises to the early endosome. Functionally, component of the adaptor protein complex 4 (AP-4). Adaptor protein complexes are vesicle coat components involved both in vesicle formation and cargo selection. They control the vesicular transport of proteins in different trafficking pathways. AP-4 forms a non clathrin-associated coat on vesicles departing the trans-Golgi network (TGN) and may be involved in the targeting of proteins from the trans-Golgi network (TGN) to the endosomal-lysosomal system. It is also involved in protein sorting to the basolateral membrane in epithelial cells and the proper asymmetric localization of somatodendritic proteins in neurons. Within AP-4, the mu-type subunit AP4M1 is directly involved in the recognition and binding of tyrosine-based sorting signals found in the cytoplasmic part of cargos. The adaptor protein complex 4 (AP-4) may also recognize other types of sorting signal. The protein is AP-4 complex subunit mu-1 of Rattus norvegicus (Rat).